The primary structure comprises 88 residues: Putative membrane protein insertion efficiency factor (88 aa).

The interval 68-88 is disordered; sequence VPPPNSDTRARGEADARSHRL. Residues 75-88 are compositionally biased toward basic and acidic residues; the sequence is TRARGEADARSHRL.

It belongs to the UPF0161 family.

It localises to the cell inner membrane. Its function is as follows. Could be involved in insertion of integral membrane proteins into the membrane. The polypeptide is Putative membrane protein insertion efficiency factor (Burkholderia cenocepacia (strain ATCC BAA-245 / DSM 16553 / LMG 16656 / NCTC 13227 / J2315 / CF5610) (Burkholderia cepacia (strain J2315))).